Consider the following 324-residue polypeptide: Viral cathepsin (324 aa).

Positions Met1–Gly16 are cleaved as a signal peptide. Positions Ala17–Gly113 are cleaved as a propeptide — activation peptide. Cystine bridges form between Cys134–Cys175, Cys168–Cys208, and Cys263–Cys311. The active site involves Cys137. N-linked (GlcNAc...) asparagine; by host glycosylation occurs at Asn159. Catalysis depends on residues His270 and Asn290.

The protein belongs to the peptidase C1 family. Synthesized as an inactive proenzyme and activated by proteolytic removal of the inhibitory propeptide.

It carries out the reaction Endopeptidase of broad specificity, hydrolyzing substrates of both cathepsin L and cathepsin B.. Cysteine protease that plays an essential role in host liquefaction to facilitate horizontal transmission of the virus. May participate in the degradation of foreign protein expressed by the baculovirus system. This Antheraea pernyi nuclear polyhedrosis virus (ApNPV) protein is Viral cathepsin (VCATH).